The sequence spans 201 residues: LexA repressor (201 aa).

Residues 28–48 (LREIAAKLGISGTLGVMKHLE) constitute a DNA-binding region (H-T-H motif). Active-site for autocatalytic cleavage activity residues include S120 and K157.

The protein belongs to the peptidase S24 family. In terms of assembly, homodimer.

The enzyme catalyses Hydrolysis of Ala-|-Gly bond in repressor LexA.. Functionally, represses a number of genes involved in the response to DNA damage (SOS response), including recA and lexA. In the presence of single-stranded DNA, RecA interacts with LexA causing an autocatalytic cleavage which disrupts the DNA-binding part of LexA, leading to derepression of the SOS regulon and eventually DNA repair. This is LexA repressor from Geobacter sp. (strain M21).